The sequence spans 159 residues: Transcriptional repressor NrdR (159 aa).

The segment at 1–21 (MRCPKCQHNKSNVIDSRQAED) is disordered. Residues 3–34 (CPKCQHNKSNVIDSRQAEDGNTIRRRRECDAC) fold into a zinc finger. Positions 49–139 (LLVVKKDGTR…VYRSFKDVDE (91 aa)) constitute an ATP-cone domain.

The protein belongs to the NrdR family. The cofactor is Zn(2+).

Functionally, negatively regulates transcription of bacterial ribonucleotide reductase nrd genes and operons by binding to NrdR-boxes. This chain is Transcriptional repressor NrdR, found in Streptococcus thermophilus (strain ATCC BAA-491 / LMD-9).